A 276-amino-acid chain; its full sequence is 4-hydroxy-3-methylbut-2-enyl diphosphate reductase (276 aa).

Cys-12 serves as a coordination point for [4Fe-4S] cluster. Residues His-36 and His-71 each coordinate (2E)-4-hydroxy-3-methylbut-2-enyl diphosphate. Dimethylallyl diphosphate-binding residues include His-36 and His-71. His-36 and His-71 together coordinate isopentenyl diphosphate. Cys-93 contributes to the [4Fe-4S] cluster binding site. A (2E)-4-hydroxy-3-methylbut-2-enyl diphosphate-binding site is contributed by His-121. Position 121 (His-121) interacts with dimethylallyl diphosphate. His-121 is a binding site for isopentenyl diphosphate. The Proton donor role is filled by Glu-123. Residue Thr-160 participates in (2E)-4-hydroxy-3-methylbut-2-enyl diphosphate binding. A [4Fe-4S] cluster-binding site is contributed by Cys-188. 4 residues coordinate (2E)-4-hydroxy-3-methylbut-2-enyl diphosphate: Ser-216, Ser-217, Asn-218, and Ser-259. Residues Ser-216, Ser-217, Asn-218, and Ser-259 each coordinate dimethylallyl diphosphate. Isopentenyl diphosphate is bound by residues Ser-216, Ser-217, Asn-218, and Ser-259.

Belongs to the IspH family. Requires [4Fe-4S] cluster as cofactor.

The enzyme catalyses isopentenyl diphosphate + 2 oxidized [2Fe-2S]-[ferredoxin] + H2O = (2E)-4-hydroxy-3-methylbut-2-enyl diphosphate + 2 reduced [2Fe-2S]-[ferredoxin] + 2 H(+). It catalyses the reaction dimethylallyl diphosphate + 2 oxidized [2Fe-2S]-[ferredoxin] + H2O = (2E)-4-hydroxy-3-methylbut-2-enyl diphosphate + 2 reduced [2Fe-2S]-[ferredoxin] + 2 H(+). It functions in the pathway isoprenoid biosynthesis; dimethylallyl diphosphate biosynthesis; dimethylallyl diphosphate from (2E)-4-hydroxy-3-methylbutenyl diphosphate: step 1/1. It participates in isoprenoid biosynthesis; isopentenyl diphosphate biosynthesis via DXP pathway; isopentenyl diphosphate from 1-deoxy-D-xylulose 5-phosphate: step 6/6. Its function is as follows. Catalyzes the conversion of 1-hydroxy-2-methyl-2-(E)-butenyl 4-diphosphate (HMBPP) into a mixture of isopentenyl diphosphate (IPP) and dimethylallyl diphosphate (DMAPP). Acts in the terminal step of the DOXP/MEP pathway for isoprenoid precursor biosynthesis. In Nautilia profundicola (strain ATCC BAA-1463 / DSM 18972 / AmH), this protein is 4-hydroxy-3-methylbut-2-enyl diphosphate reductase.